The sequence spans 229 residues: Transmembrane emp24 domain-containing protein 5 (229 aa).

The first 27 residues, 1–27 (MGVRMWLPFPMLLLSALPATLLSGAAG), serve as a signal peptide directing secretion. Topologically, residues 28 to 196 (FTPSLDSDFT…IQESNFDRVN (169 aa)) are lumenal. The GOLD domain occupies 45–126 (KECFYQPMPL…EKVIFFELIL (82 aa)). Residues 197-217 (FWSVVNLMVMVVVSAIQVYTL) traverse the membrane as a helical segment. Residues 218–229 (KSLFEDKRKSRT) lie on the Cytoplasmic side of the membrane.

This sequence belongs to the EMP24/GP25L family. As to quaternary structure, interacts with TMED9 and TMED10.

It is found in the endoplasmic reticulum membrane. It localises to the golgi apparatus. The protein localises to the cis-Golgi network membrane. The protein resides in the endoplasmic reticulum-Golgi intermediate compartment membrane. Functionally, potential role in vesicular protein trafficking, mainly in the early secretory pathway. Required for the maintenance of the Golgi apparatus; involved in protein exchange between Golgi stacks during assembly. Probably not required for COPI-vesicle-mediated retrograde transport. This chain is Transmembrane emp24 domain-containing protein 5 (Tmed5), found in Rattus norvegicus (Rat).